An 86-amino-acid chain; its full sequence is Short neurotoxin homolog NTL1 (86 aa).

The N-terminal stretch at 1 to 21 is a signal peptide; sequence MKTLLLSLVVLTIACLDLGYT. Cystine bridges form between C24-C45, C38-C62, C66-C78, and C79-C84.

Expressed by the venom gland.

It localises to the secreted. This Bungarus multicinctus (Many-banded krait) protein is Short neurotoxin homolog NTL1.